The sequence spans 492 residues: WD repeat-containing protein JIP5 (492 aa).

WD repeat units follow at residues Arg127–Lys166, Lys178–Ser217, Arg236–Ser274, Asp276–Gln317, and Arg365–Asn405. Acidic residues-rich tracts occupy residues Glu404–Glu414 and Asp422–Thr433. The disordered stretch occupies residues Glu404 to Met472. Over residues Lys449–Asn462 the composition is skewed to basic and acidic residues.

Interacts with BUD27 and GIS1.

It is found in the nucleus. The protein localises to the nucleolus. This Saccharomyces cerevisiae (strain ATCC 204508 / S288c) (Baker's yeast) protein is WD repeat-containing protein JIP5 (JIP5).